A 63-amino-acid polypeptide reads, in one-letter code: MARYRRHSRSRSRSRYRRRRRRRSRHHNRRRTYRRSRRHSIRRRGRRRGYSRRRYSRRGRRRY.

The interval M1–Y63 is disordered.

This sequence belongs to the protamine P1 family. Testis.

It is found in the nucleus. Its subcellular location is the chromosome. In terms of biological role, protamines substitute for histones in the chromatin of sperm during the haploid phase of spermatogenesis. They compact sperm DNA into a highly condensed, stable and inactive complex. This is Sperm protamine P1 (PRM1) from Sminthopsis bindi (Kakadu dunnart).